A 34-amino-acid polypeptide reads, in one-letter code: Non-toxic venom protein (34 aa).

Positions 1 to 34 (KEGYPTNSEGCKITXLFNDPYCKGXCINLSTQAD) constitute an LCN-type CS-alpha/beta domain.

As to expression, expressed by the venom gland.

It localises to the secreted. In terms of biological role, does not cause symptoms of intoxication, paralysis or death in insects (A.domestica). In Rhopalurus junceus (Caribbean blue scorpion), this protein is Non-toxic venom protein.